A 316-amino-acid chain; its full sequence is 4-amino-5-hydroxymethyl-2-methylpyrimidine phosphate synthase (316 aa).

At Lys-66 the chain carries N6-(pyridoxal phosphate)lysine. Residue His-70 is part of the active site. 118 to 121 contacts pyridoxal 5'-phosphate; the sequence is GEFG. The CCCFC; essential for catalytic activity, may be the site of iron coordination motif lies at 191–195; that stretch reads CCCFC.

It belongs to the NMT1/THI5 family. In terms of assembly, homodimer. Requires Fe cation as cofactor.

It catalyses the reaction N(6)-(pyridoxal phosphate)-L-lysyl-[4-amino-5-hydroxymethyl-2-methylpyrimidine phosphate synthase] + L-histidyl-[4-amino-5-hydroxymethyl-2-methylpyrimidine phosphate synthase] + 2 Fe(3+) + 4 H2O = L-lysyl-[4-amino-5-hydroxymethyl-2-methylpyrimidine phosphate synthase] + (2S)-2-amino-5-hydroxy-4-oxopentanoyl-[4-amino-5-hydroxymethyl-2-methylpyrimidine phosphate synthase] + 4-amino-2-methyl-5-(phosphooxymethyl)pyrimidine + 3-oxopropanoate + 2 Fe(2+) + 2 H(+). It participates in cofactor biosynthesis; thiamine diphosphate biosynthesis. Functionally, responsible for the formation of the pyrimidine heterocycle in the thiamine biosynthesis pathway. Catalyzes the formation of hydroxymethylpyrimidine phosphate (HMP-P) from histidine and pyridoxal phosphate (PLP). The protein uses PLP and the active site histidine to form HMP-P, generating an inactive enzyme. The enzyme can only undergo a single turnover, which suggests it is a suicide enzyme. The polypeptide is 4-amino-5-hydroxymethyl-2-methylpyrimidine phosphate synthase (Legionella pneumophila subsp. pneumophila (strain Philadelphia 1 / ATCC 33152 / DSM 7513)).